The primary structure comprises 83 residues: uncharacterized protein (83 aa).

This is an uncharacterized protein from Acidianus bottle-shaped virus (isolate Italy/Pozzuoli) (ABV).